The following is a 303-amino-acid chain: GTP cyclohydrolase FolE2 (303 aa).

Belongs to the GTP cyclohydrolase IV family.

The enzyme catalyses GTP + H2O = 7,8-dihydroneopterin 3'-triphosphate + formate + H(+). It functions in the pathway cofactor biosynthesis; 7,8-dihydroneopterin triphosphate biosynthesis; 7,8-dihydroneopterin triphosphate from GTP: step 1/1. Its function is as follows. Converts GTP to 7,8-dihydroneopterin triphosphate. The sequence is that of GTP cyclohydrolase FolE2 from Exiguobacterium sp. (strain ATCC BAA-1283 / AT1b).